Reading from the N-terminus, the 524-residue chain is MGNFYRKNIEILGQQRFLYPLLFQDEFYAIAQNLFSNPRASVEVREEICKNCNSFSFFTVKRLIFKIRKRNVFLESKNKNSISLALIAEGLTLGLDVFFSAQWKRFVDGEGGTEQLSFQSIHSIFAYLDETTPYSFSSLGIRIPSYVHPELFIRMFNCLCWIDDVCFLHLLSSMLCFLKHLTILDKFIFFNSKGFIRLVLFLWNIFVSKGESSKISLWKQKCYRAKFKSFGSFAEQTHFHRKMKLKNPKIKAHEKFSEVFFFSHYSRFGEKSVLIGTPILIKKYRYFFCHFWQTSFFFSETYGLFVHEFSRKNISLIGYSFYFQNHRTFFRIKMFYDFFFTELVNNEFHPKFGIISIMKFLSIEGFCDIMGRPISKLSWTCFTDDDIFDKCDRFWKILYYYYCGAKNKAYLDRIKYILLLSCFKTIAFKHKSTIRVVRKEFDFELRKKFFPKEIEFERDFLCSRFAQKFKKWLLKINLATERFWLLNILKVHFLTKSWHKDQDALDFCLIVEKNNILPMLNNFL.

It belongs to the intron maturase 2 family. MatK subfamily.

It is found in the plastid. The protein resides in the chloroplast. In terms of biological role, usually encoded in the trnK tRNA gene intron. Probably assists in splicing its own and other chloroplast group II introns. The chain is Maturase K from Welwitschia mirabilis (Tree tumbo).